Consider the following 309-residue polypeptide: ATP synthase gamma chain (309 aa).

This sequence belongs to the ATPase gamma chain family. As to quaternary structure, F-type ATPases have 2 components, CF(1) - the catalytic core - and CF(0) - the membrane proton channel. CF(1) has five subunits: alpha(3), beta(3), gamma(1), delta(1), epsilon(1). CF(0) has three main subunits: a, b and c.

The protein localises to the cell membrane. In terms of biological role, produces ATP from ADP in the presence of a proton gradient across the membrane. The gamma chain is believed to be important in regulating ATPase activity and the flow of protons through the CF(0) complex. In Mycolicibacterium gilvum (strain PYR-GCK) (Mycobacterium gilvum (strain PYR-GCK)), this protein is ATP synthase gamma chain.